A 441-amino-acid polypeptide reads, in one-letter code: Glutamyl-tRNA reductase (441 aa).

Residues 64–67 (TCNR), Ser123, 128–130 (ETQ), and Gln134 contribute to the substrate site. The active-site Nucleophile is Cys65. 203–208 (GAGEMI) serves as a coordination point for NADP(+).

It belongs to the glutamyl-tRNA reductase family. In terms of assembly, homodimer.

It carries out the reaction (S)-4-amino-5-oxopentanoate + tRNA(Glu) + NADP(+) = L-glutamyl-tRNA(Glu) + NADPH + H(+). It participates in porphyrin-containing compound metabolism; protoporphyrin-IX biosynthesis; 5-aminolevulinate from L-glutamyl-tRNA(Glu): step 1/2. Its function is as follows. Catalyzes the NADPH-dependent reduction of glutamyl-tRNA(Glu) to glutamate 1-semialdehyde (GSA). This chain is Glutamyl-tRNA reductase, found in Burkholderia pseudomallei (strain K96243).